The sequence spans 267 residues: Tryptophan synthase alpha chain (267 aa).

Catalysis depends on proton acceptor residues E49 and D60.

The protein belongs to the TrpA family. Tetramer of two alpha and two beta chains.

It catalyses the reaction (1S,2R)-1-C-(indol-3-yl)glycerol 3-phosphate + L-serine = D-glyceraldehyde 3-phosphate + L-tryptophan + H2O. It participates in amino-acid biosynthesis; L-tryptophan biosynthesis; L-tryptophan from chorismate: step 5/5. Its function is as follows. The alpha subunit is responsible for the aldol cleavage of indoleglycerol phosphate to indole and glyceraldehyde 3-phosphate. This is Tryptophan synthase alpha chain from Carboxydothermus hydrogenoformans (strain ATCC BAA-161 / DSM 6008 / Z-2901).